The sequence spans 245 residues: UPF0246 protein CE1889 (245 aa).

The segment at 1-20 (MLILLPPSETKTPGGAGAPL) is disordered.

Belongs to the UPF0246 family.

The polypeptide is UPF0246 protein CE1889 (Corynebacterium efficiens (strain DSM 44549 / YS-314 / AJ 12310 / JCM 11189 / NBRC 100395)).